We begin with the raw amino-acid sequence, 201 residues long: Phospholipase A2 inhibitor PIP (201 aa).

An N-terminal signal peptide occupies residues 1–19 (MKSLQTICLLFIFIARGTS). 8 cysteine pairs are disulfide-bonded: cysteine 22-cysteine 46, cysteine 25-cysteine 32, cysteine 39-cysteine 67, cysteine 73-cysteine 94, cysteine 95-cysteine 100, cysteine 118-cysteine 143, cysteine 136-cysteine 165, and cysteine 169-cysteine 191. Asparagine 157 carries N-linked (GlcNAc...) asparagine glycosylation.

As to quaternary structure, homohexamer. Post-translationally, glycosylated. As to expression, expressed by the liver.

The protein resides in the secreted. Functionally, inhibits the enzymatic activity of phospholipase A2 (PA2). Binds to the major PLA2 toxin of D.russelli siamensis (Daboiatoxin, AC Q7T2R1, and AC Q7T3T5) at 1-2-fold molar excess of inhibitor to toxin. It exhibits broad spectra in neutralizing the toxicity of various snake venoms and toxins and inhibits the formation of edema in mice. May bind to PLA2 through its proline-rich hydrophobic core region. The protein is Phospholipase A2 inhibitor PIP of Malayopython reticulatus (Reticulate python).